A 27-amino-acid polypeptide reads, in one-letter code: Metalloproteinase inhibitor 1 (27 aa).

Residues 1-12 (IEPERQEEEEEE) show a composition bias toward acidic residues. Residues 1–27 (IEPERQEEEEEETRQRVRRGQVRQQQQ) form a disordered region.

Metalloproteinase inhibitor, active on a globulinase from L.albus seeds, thermolysin and gelatinase B. This Lupinus albus (White lupine) protein is Metalloproteinase inhibitor 1.